Reading from the N-terminus, the 368-residue chain is Cytochrome b-c1 complex subunit 2, mitochondrial (368 aa).

A mitochondrion-targeting transit peptide spans 1–16 (MLSAARLQFAQGSVRR). Phosphoserine occurs at positions 141 and 168.

This sequence belongs to the peptidase M16 family. UQCRC2/QCR2 subfamily. Component of the ubiquinol-cytochrome c oxidoreductase (cytochrome b-c1 complex, complex III, CIII), a multisubunit enzyme composed of 10 subunits. The complex is composed of 3 respiratory subunits cytochrome b (COB), cytochrome c1 (CYT1) and Rieske protein (RIP1), 2 core protein subunits COR1 and QCR2, and 5 low-molecular weight protein subunits QCR6, QCR7, QCR8, QCR9 and QCR10. The complex exists as an obligatory dimer and forms supercomplexes (SCs) in the inner mitochondrial membrane with a monomer or a dimer of cytochrome c oxidase (complex IV, CIV), resulting in 2 different assemblies (supercomplexes III(2)IV and III(2)IV(2)).

The protein localises to the mitochondrion inner membrane. Component of the ubiquinol-cytochrome c oxidoreductase, a multisubunit transmembrane complex that is part of the mitochondrial electron transport chain which drives oxidative phosphorylation. The respiratory chain contains 3 multisubunit complexes succinate dehydrogenase (complex II, CII), ubiquinol-cytochrome c oxidoreductase (cytochrome b-c1 complex, complex III, CIII) and cytochrome c oxidase (complex IV, CIV), that cooperate to transfer electrons derived from NADH and succinate to molecular oxygen, creating an electrochemical gradient over the inner membrane that drives transmembrane transport and the ATP synthase. The cytochrome b-c1 complex catalyzes electron transfer from ubiquinol to cytochrome c, linking this redox reaction to translocation of protons across the mitochondrial inner membrane, with protons being carried across the membrane as hydrogens on the quinol. In the process called Q cycle, 2 protons are consumed from the matrix, 4 protons are released into the intermembrane space and 2 electrons are passed to cytochrome c. This Saccharomyces cerevisiae (strain ATCC 204508 / S288c) (Baker's yeast) protein is Cytochrome b-c1 complex subunit 2, mitochondrial (QCR2).